Here is an 876-residue protein sequence, read N- to C-terminus: Alanine--tRNA ligase (876 aa).

Zn(2+) contacts are provided by H568, H572, C670, and H674.

The protein belongs to the class-II aminoacyl-tRNA synthetase family. Requires Zn(2+) as cofactor.

The protein resides in the cytoplasm. It catalyses the reaction tRNA(Ala) + L-alanine + ATP = L-alanyl-tRNA(Ala) + AMP + diphosphate. Catalyzes the attachment of alanine to tRNA(Ala) in a two-step reaction: alanine is first activated by ATP to form Ala-AMP and then transferred to the acceptor end of tRNA(Ala). Also edits incorrectly charged Ser-tRNA(Ala) and Gly-tRNA(Ala) via its editing domain. The sequence is that of Alanine--tRNA ligase from Anaplasma phagocytophilum (strain HZ).